The primary structure comprises 404 residues: Cysteine desulfurase IscS (404 aa).

Pyridoxal 5'-phosphate contacts are provided by residues 75–76 (AT), Asn-155, Gln-183, and 203–205 (SAH). An N6-(pyridoxal phosphate)lysine modification is found at Lys-206. Thr-243 is a binding site for pyridoxal 5'-phosphate. Cys-328 functions as the Cysteine persulfide intermediate in the catalytic mechanism. Cys-328 is a [2Fe-2S] cluster binding site.

It belongs to the class-V pyridoxal-phosphate-dependent aminotransferase family. NifS/IscS subfamily. Homodimer. Forms a heterotetramer with IscU, interacts with other sulfur acceptors. Pyridoxal 5'-phosphate is required as a cofactor.

The protein localises to the cytoplasm. The enzyme catalyses (sulfur carrier)-H + L-cysteine = (sulfur carrier)-SH + L-alanine. It functions in the pathway cofactor biosynthesis; iron-sulfur cluster biosynthesis. Its function is as follows. Master enzyme that delivers sulfur to a number of partners involved in Fe-S cluster assembly, tRNA modification or cofactor biosynthesis. Catalyzes the removal of elemental sulfur atoms from cysteine to produce alanine. Functions as a sulfur delivery protein for Fe-S cluster synthesis onto IscU, an Fe-S scaffold assembly protein, as well as other S acceptor proteins. The protein is Cysteine desulfurase IscS of Aeromonas salmonicida (strain A449).